A 146-amino-acid polypeptide reads, in one-letter code: UPF0735 ACT domain-containing protein CHY_1913 (146 aa).

An ACT domain is found at 70-145; the sequence is TLALNLEHRA…GVSKVELVGQ (76 aa).

This sequence belongs to the UPF0735 family.

This chain is UPF0735 ACT domain-containing protein CHY_1913, found in Carboxydothermus hydrogenoformans (strain ATCC BAA-161 / DSM 6008 / Z-2901).